The sequence spans 62 residues: Photosystem II reaction center protein Z (62 aa).

The next 2 membrane-spanning stretches (helical) occupy residues 8–28 and 41–61; these read LVFI…VTFA and YTGA…NSFI.

This sequence belongs to the PsbZ family. PSII is composed of 1 copy each of membrane proteins PsbA, PsbB, PsbC, PsbD, PsbE, PsbF, PsbH, PsbI, PsbJ, PsbK, PsbL, PsbM, PsbT, sbX, PsbY, PsbZ, Psb30/Ycf12, at least 3 peripheral proteins of the oxygen-evolving complex and a large number of cofactors. It forms dimeric complexes.

The protein localises to the plastid. The protein resides in the chloroplast thylakoid membrane. Its function is as follows. May control the interaction of photosystem II (PSII) cores with the light-harvesting antenna, regulates electron flow through the 2 photosystem reaction centers. PSII is a light-driven water plastoquinone oxidoreductase, using light energy to abstract electrons from H(2)O, generating a proton gradient subsequently used for ATP formation. This Gracilaria tenuistipitata var. liui (Red alga) protein is Photosystem II reaction center protein Z.